The sequence spans 232 residues: Large ribosomal subunit protein uL1 (232 aa).

The protein belongs to the universal ribosomal protein uL1 family. Part of the 50S ribosomal subunit.

Binds directly to 23S rRNA. The L1 stalk is quite mobile in the ribosome, and is involved in E site tRNA release. Functionally, protein L1 is also a translational repressor protein, it controls the translation of the L11 operon by binding to its mRNA. The protein is Large ribosomal subunit protein uL1 of Francisella tularensis subsp. holarctica (strain LVS).